Reading from the N-terminus, the 493-residue chain is Guanosine-5'-triphosphate,3'-diphosphate pyrophosphatase (493 aa).

This sequence belongs to the GppA/Ppx family. GppA subfamily.

The enzyme catalyses guanosine 3'-diphosphate 5'-triphosphate + H2O = guanosine 3',5'-bis(diphosphate) + phosphate + H(+). Its pathway is purine metabolism; ppGpp biosynthesis; ppGpp from GTP: step 2/2. Functionally, catalyzes the conversion of pppGpp to ppGpp. Guanosine pentaphosphate (pppGpp) is a cytoplasmic signaling molecule which together with ppGpp controls the 'stringent response', an adaptive process that allows bacteria to respond to amino acid starvation, resulting in the coordinated regulation of numerous cellular activities. This Salmonella gallinarum (strain 287/91 / NCTC 13346) protein is Guanosine-5'-triphosphate,3'-diphosphate pyrophosphatase.